Consider the following 274-residue polypeptide: Nitrogenase iron protein (274 aa).

Residue 8–15 (GKGGIGKS) participates in ATP binding. Residue C94 participates in [4Fe-4S] cluster binding. R97 carries the ADP-ribosylarginine; by dinitrogenase reductase ADP-ribosyltransferase modification. C131 contacts [4Fe-4S] cluster.

It belongs to the NifH/BchL/ChlL family. As to quaternary structure, homodimer. [4Fe-4S] cluster serves as cofactor. In terms of processing, the reversible ADP-ribosylation of Arg-97 inactivates the nitrogenase reductase and regulates nitrogenase activity.

The enzyme catalyses N2 + 8 reduced [2Fe-2S]-[ferredoxin] + 16 ATP + 16 H2O = H2 + 8 oxidized [2Fe-2S]-[ferredoxin] + 2 NH4(+) + 16 ADP + 16 phosphate + 6 H(+). In terms of biological role, the key enzymatic reactions in nitrogen fixation are catalyzed by the nitrogenase complex, which has 2 components: the iron protein and the molybdenum-iron protein. In Chlorobium phaeobacteroides (strain DSM 266 / SMG 266 / 2430), this protein is Nitrogenase iron protein.